The chain runs to 751 residues: E3 ubiquitin-protein ligase SMURF2 (751 aa).

One can recognise a C2 domain in the interval 1-119; sequence MSNQGSRRNG…TGYQRLDLCK (119 aa). Residues 157–190 form the WW 1 domain; the sequence is NDLPDGWEERRTASGRIQYLNHITRTTQWERPTR. A compositionally biased stretch (polar residues) spans 214-226; the sequence is GTNGASCGQTSDP. The segment at 214–236 is disordered; the sequence is GTNGASCGQTSDPRISERRVRSQ. 2 consecutive WW domains span residues 251–284 and 297–330; these read PDLP…DPRV and GPLP…DPRL. The region spanning 417 to 751 is the HECT domain; it reads RPKDLWKRLM…IEETCGFAVE (335 aa). C719 serves as the catalytic Glycyl thioester intermediate.

It localises to the nucleus. The protein resides in the cytoplasm. Its subcellular location is the cell membrane. The protein localises to the membrane raft. The enzyme catalyses S-ubiquitinyl-[E2 ubiquitin-conjugating enzyme]-L-cysteine + [acceptor protein]-L-lysine = [E2 ubiquitin-conjugating enzyme]-L-cysteine + N(6)-ubiquitinyl-[acceptor protein]-L-lysine.. The protein operates within protein modification; protein ubiquitination. Its function is as follows. E3 ubiquitin-protein ligase which accepts ubiquitin from an E2 ubiquitin-conjugating enzyme in the form of a thioester and then directly transfers the ubiquitin to targeted substrates. The chain is E3 ubiquitin-protein ligase SMURF2 (smurf2) from Xenopus laevis (African clawed frog).